The following is a 323-amino-acid chain: Glyoxylate/hydroxypyruvate reductase B (323 aa).

The disordered stretch occupies residues 37–62 (AEHGGAGARRRHDRLQQHGGSSAAGE). Residues R236 and E265 contribute to the active site. H284 acts as the Proton donor in catalysis.

The protein belongs to the D-isomer specific 2-hydroxyacid dehydrogenase family. GhrB subfamily. In terms of assembly, homodimer.

It is found in the cytoplasm. It carries out the reaction glycolate + NADP(+) = glyoxylate + NADPH + H(+). It catalyses the reaction (R)-glycerate + NAD(+) = 3-hydroxypyruvate + NADH + H(+). The catalysed reaction is (R)-glycerate + NADP(+) = 3-hydroxypyruvate + NADPH + H(+). Catalyzes the NADPH-dependent reduction of glyoxylate and hydroxypyruvate into glycolate and glycerate, respectively. This Enterobacter agglomerans (Erwinia herbicola) protein is Glyoxylate/hydroxypyruvate reductase B (tkrA).